Consider the following 232-residue polypeptide: Ion-translocating oxidoreductase complex subunit E (232 aa).

Helical transmembrane passes span 18 to 38, 39 to 59, 69 to 89, 93 to 113, 127 to 147, and 182 to 202; these read GLVQ…LTNA, LGLG…VSLV, IPVF…LINA, GLYL…IIIG, AAFD…VLGA, and PFLL…LIAL.

This sequence belongs to the NqrDE/RnfAE family. The complex is composed of six subunits: RnfA, RnfB, RnfC, RnfD, RnfE and RnfG.

It is found in the cell inner membrane. Functionally, part of a membrane-bound complex that couples electron transfer with translocation of ions across the membrane. In Shewanella sp. (strain MR-4), this protein is Ion-translocating oxidoreductase complex subunit E.